The following is a 79-amino-acid chain: Biotin synthase auxiliary protein (79 aa).

Belongs to the BsaP family. Iron-sulfur cluster serves as cofactor.

Functionally, required for the activity of the biotin synthase BioB. The polypeptide is Biotin synthase auxiliary protein (Mycobacterium bovis (strain ATCC BAA-935 / AF2122/97)).